A 215-amino-acid polypeptide reads, in one-letter code: Cytochrome c biogenesis ATP-binding export protein CcmA (215 aa).

Residues 3–215 form the ABC transporter domain; it reads LEAENLAGER…MAAFSVEDIA (213 aa). Position 35–42 (35–42) interacts with ATP; sequence GPNGSGKS.

It belongs to the ABC transporter superfamily. CcmA exporter (TC 3.A.1.107) family. The complex is composed of two ATP-binding proteins (CcmA) and two transmembrane proteins (CcmB).

The protein resides in the cell inner membrane. The enzyme catalyses heme b(in) + ATP + H2O = heme b(out) + ADP + phosphate + H(+). Its function is as follows. Part of the ABC transporter complex CcmAB involved in the biogenesis of c-type cytochromes; once thought to export heme, this seems not to be the case, but its exact role is uncertain. Responsible for energy coupling to the transport system. The protein is Cytochrome c biogenesis ATP-binding export protein CcmA of Brucella abortus (strain 2308).